The chain runs to 390 residues: GTPase Obg (390 aa).

The 159-residue stretch at 1 to 159 folds into the Obg domain; the sequence is MKFVDEASIL…RELLLELMLL (159 aa). Residues 127 to 147 form a disordered region; it reads NTRFKSSVNRTPRQKTNGTPG. The span at 129–145 shows a compositional bias: polar residues; the sequence is RFKSSVNRTPRQKTNGT. Positions 160–333 constitute an OBG-type G domain; it reads ADVGMLGMPN…LCWDVMTFII (174 aa). GTP contacts are provided by residues 166 to 173, 191 to 195, 213 to 216, 283 to 286, and 314 to 316; these read GMPNAGKS, FTTLV, DIPG, NKID, and SAA. Residues S173 and T193 each coordinate Mg(2+).

It belongs to the TRAFAC class OBG-HflX-like GTPase superfamily. OBG GTPase family. As to quaternary structure, monomer. Mg(2+) is required as a cofactor.

The protein localises to the cytoplasm. Functionally, an essential GTPase which binds GTP, GDP and possibly (p)ppGpp with moderate affinity, with high nucleotide exchange rates and a fairly low GTP hydrolysis rate. Plays a role in control of the cell cycle, stress response, ribosome biogenesis and in those bacteria that undergo differentiation, in morphogenesis control. This Shigella dysenteriae serotype 1 (strain Sd197) protein is GTPase Obg.